We begin with the raw amino-acid sequence, 175 residues long: Chorismate pyruvate-lyase (175 aa).

4 residues coordinate substrate: Met-36, Arg-78, Leu-116, and Glu-157.

The protein belongs to the UbiC family. As to quaternary structure, monomer.

Its subcellular location is the cytoplasm. The enzyme catalyses chorismate = 4-hydroxybenzoate + pyruvate. It participates in cofactor biosynthesis; ubiquinone biosynthesis. In terms of biological role, removes the pyruvyl group from chorismate, with concomitant aromatization of the ring, to provide 4-hydroxybenzoate (4HB) for the ubiquinone pathway. This chain is Chorismate pyruvate-lyase, found in Hamiltonella defensa subsp. Acyrthosiphon pisum (strain 5AT).